The chain runs to 88 residues: uncharacterized protein (88 aa).

This is an uncharacterized protein from Haloarcula hispanica (His1V).